We begin with the raw amino-acid sequence, 185 residues long: Heavy metal-associated isoprenylated plant protein 11 (185 aa).

The 68-residue stretch at 39 to 106 (QQNTNVVFKL…ICKHVAIIAA (68 aa)) folds into the HMA domain. A compositionally biased stretch (basic and acidic residues) spans 109–158 (IREPEQNRNPVTRREPNREPEQNRSRVTRREPSREPEPNRAPLARRESRP). The segment at 109-185 (IREPEQNRNP…GENSDGCIIM (77 aa)) is disordered. Cysteine 182 carries the cysteine methyl ester modification. Cysteine 182 carries S-farnesyl cysteine lipidation. The propeptide at 183 to 185 (IIM) is removed in mature form.

Belongs to the HIPP family.

Its function is as follows. Probable heavy-metal-binding protein. This Arabidopsis thaliana (Mouse-ear cress) protein is Heavy metal-associated isoprenylated plant protein 11.